The following is a 135-amino-acid chain: Large ribosomal subunit protein bL19 (135 aa).

It belongs to the bacterial ribosomal protein bL19 family.

Its function is as follows. This protein is located at the 30S-50S ribosomal subunit interface and may play a role in the structure and function of the aminoacyl-tRNA binding site. The polypeptide is Large ribosomal subunit protein bL19 (Xanthomonas axonopodis pv. citri (strain 306)).